Consider the following 81-residue polypeptide: Large ribosomal subunit protein bL31B (81 aa).

It belongs to the bacterial ribosomal protein bL31 family. Type B subfamily. As to quaternary structure, part of the 50S ribosomal subunit.

In Lactiplantibacillus plantarum (strain ATCC BAA-793 / NCIMB 8826 / WCFS1) (Lactobacillus plantarum), this protein is Large ribosomal subunit protein bL31B (rpmE2).